Here is a 393-residue protein sequence, read N- to C-terminus: Formate-dependent phosphoribosylglycinamide formyltransferase (393 aa).

N(1)-(5-phospho-beta-D-ribosyl)glycinamide-binding positions include 22–23 (EL) and E82. ATP-binding positions include R114, K155, 160–165 (SSGHGQ), 195–198 (EGFV), and E203. In terms of domain architecture, ATP-grasp spans 119-308 (RLAAEELGLP…QFALHARAVL (190 aa)). Mg(2+) contacts are provided by E267 and E279. N(1)-(5-phospho-beta-D-ribosyl)glycinamide-binding positions include D286, K356, and 363–364 (RR).

Belongs to the PurK/PurT family. As to quaternary structure, homodimer.

It carries out the reaction N(1)-(5-phospho-beta-D-ribosyl)glycinamide + formate + ATP = N(2)-formyl-N(1)-(5-phospho-beta-D-ribosyl)glycinamide + ADP + phosphate + H(+). Its pathway is purine metabolism; IMP biosynthesis via de novo pathway; N(2)-formyl-N(1)-(5-phospho-D-ribosyl)glycinamide from N(1)-(5-phospho-D-ribosyl)glycinamide (formate route): step 1/1. Involved in the de novo purine biosynthesis. Catalyzes the transfer of formate to 5-phospho-ribosyl-glycinamide (GAR), producing 5-phospho-ribosyl-N-formylglycinamide (FGAR). Formate is provided by PurU via hydrolysis of 10-formyl-tetrahydrofolate. The sequence is that of Formate-dependent phosphoribosylglycinamide formyltransferase from Parabacteroides distasonis (strain ATCC 8503 / DSM 20701 / CIP 104284 / JCM 5825 / NCTC 11152).